We begin with the raw amino-acid sequence, 231 residues long: Androgen-dependent TFPI-regulating protein (231 aa).

Residues 1–7 lie on the Cytoplasmic side of the membrane; the sequence is MTRTTTC. Residues 8–28 traverse the membrane as a helical segment; it reads VYHFLVWNWYIFLNYYIPLIG. Residues 29 to 45 are Extracellular-facing; that stretch reads KDDEKLKEFHDGGRSKY. A helical membrane pass occupies residues 46–66; the sequence is LTLLNLLLQAIFFGVACLDDV. Topologically, residues 67 to 85 are cytoplasmic; it reads LKRIIGRKDIKFITSTRDL. The chain crosses the membrane as a helical span at residues 86 to 106; that stretch reads LFSTLVFPISTFIFLVFWTLF. Over 107-123 the chain is Extracellular; that stretch reads YYDRSLIYPKGLDDYFP. The chain crosses the membrane as a helical span at residues 124 to 144; it reads AWLNHAMHTYILLFVLVETIL. The Cytoplasmic portion of the chain corresponds to 145–154; the sequence is RPHHYPSKKL. Residues 155–172 traverse the membrane as a helical segment; the sequence is GLALLGACNLAYITRVLW. The Extracellular segment spans residues 173-190; sequence RYSQTGNWVYPVFASLNP. The helical transmembrane segment at 191-211 threads the bilayer; the sequence is LGIIIFFLVCYILNASIYLVG. The Cytoplasmic portion of the chain corresponds to 212–231; sequence EKINHWKWGATVKPLMKKKK.

It belongs to the AIG1 family. In terms of tissue distribution, highly expressed in flank organs and weakly in testis and earlobes.

It is found in the cell membrane. It catalyses the reaction 9-hexadecanoyloxy-octadecanoate + H2O = 9-hydroxy-octadecanoate + hexadecanoate + H(+). The enzyme catalyses 12-hexadecanoyloxy-octadecanoate + H2O = 12-hydroxyoctadecanoate + hexadecanoate + H(+). It carries out the reaction 9-(9Z-hexadecenoyloxy)-octadecanoate + H2O = (9Z)-hexadecenoate + 9-hydroxy-octadecanoate + H(+). The catalysed reaction is 12-(9Z-hexadecenoyloxy)-octadecanoate + H2O = 12-hydroxyoctadecanoate + (9Z)-hexadecenoate + H(+). It catalyses the reaction 13-(9Z-hexadecenoyloxy)-octadecanoate + H2O = 13-hydroxy-octadecanoate + (9Z)-hexadecenoate + H(+). The enzyme catalyses 9-octadecanoyloxy-octadecanoate + H2O = 9-hydroxy-octadecanoate + octadecanoate + H(+). It carries out the reaction 12-octadecanoyloxy-octadecanoate + H2O = 12-hydroxyoctadecanoate + octadecanoate + H(+). The catalysed reaction is 13-octadecanoyloxy-octadecanoate + H2O = 13-hydroxy-octadecanoate + octadecanoate + H(+). It catalyses the reaction 9-(9Z-octadecenoyloxy)-octadecanoate + H2O = 9-hydroxy-octadecanoate + (9Z)-octadecenoate + H(+). The enzyme catalyses 12-(9Z-octadecenoyloxy)-octadecanoate + H2O = 12-hydroxyoctadecanoate + (9Z)-octadecenoate + H(+). It carries out the reaction 13-(9Z-octadecenoyloxy)-octadecanoate + H2O = 13-hydroxy-octadecanoate + (9Z)-octadecenoate + H(+). The catalysed reaction is 5-(9Z-octadecenoyloxy)-octadecanoate + H2O = 5-hydroxy-octadecanoate + (9Z)-octadecenoate + H(+). Its function is as follows. Hydrolyzes bioactive fatty-acid esters of hydroxy-fatty acids (FAHFAs), but not other major classes of lipids. Shows a preference for FAHFAs with branching distal from the carboxylate head group of the lipids. Regulates the expression and the cell-associated anticoagulant activity of the inhibitor TFPI in endothelial cells (in vitro). This is Androgen-dependent TFPI-regulating protein (ADTRP) from Mesocricetus auratus (Golden hamster).